A 2325-amino-acid polypeptide reads, in one-letter code: Protein Ycf2 (2325 aa).

3 disordered regions span residues 168-189 (SSQL…GTED), 221-251 (TEIE…EMNN), and 947-1006 (KRKK…KRKE). Low complexity predominate over residues 230 to 240 (KGLSGSSSKSR). 2 stretches are compositionally biased toward basic and acidic residues: residues 241-250 (LFTEGEKEMN) and 955-1004 (KRKE…PEKR). Residue 1436–1443 (GSIGSGRS) coordinates ATP. Disordered stretches follow at residues 1510–1529 (YEDR…DYEP), 1855–1996 (LVGS…LLRP), and 2063–2179 (PAEE…DGFS). Acidic residues predominate over residues 1861 to 1976 (TEEEVEGTEE…VEGTEDEEGE (116 aa)). The segment covering 1977-1989 (GTEKDSSQFDNDR) has biased composition (basic and acidic residues). 2 stretches are compositionally biased toward acidic residues: residues 2063–2080 (PAEE…EALE) and 2087–2162 (GEEE…ENDS).

The protein belongs to the Ycf2 family.

It is found in the plastid. The protein localises to the chloroplast stroma. Functionally, probable ATPase of unknown function. Its presence in a non-photosynthetic plant (Epifagus virginiana) and experiments in tobacco indicate that it has an essential function which is probably not related to photosynthesis. The sequence is that of Protein Ycf2 from Oenothera biennis (German evening primrose).